A 530-amino-acid polypeptide reads, in one-letter code: MSKDEIKDKKRKSEEYEVVDKKKHKKDKKDKKEKKDKKEKKLKKDKKDKKDKKETKSESESNEDNESVASVSTSSTVDGYTENADLLKVPQSEIDEFFTTNEVAVEDESKLNLRPLLSFSHISLDSRIQAEISKFPKPTPIQAVSWPYLLAGKDVIGVAETGSGKTFAFGVPAINNILTKSGSKPGKNGIQVLIISPTRELASQIYDNLVILTDKVGLECCCVYGGVPKDEQRTQLKRSQVVVATPGRLLDLIQEGAANLSNVNYLVLDEADRMLEKGFEEDIKNIIRETKSTGRQTLMFTATWPKEVRELASTFMNSPIKVSIGNTDELSANKRITQIVEVIDPFKKERKLLELLKKYQSGSKKDDKVLIFALYKKEAARVERNLNYNGYKVSAIHGDLSQQQRTNALDEFKTGRSSILLATDVAARGLDIPNVKTVINLTFPLTVEDYVHRIGRTGRAGKTGTAHTLFTEQEKHLAGSLVNVLNGAGQPVPEELKKFGTHTKKKEHSAYGAFYKDVDMTKKAKKITFD.

The segment covering 1 to 20 (MSKDEIKDKKRKSEEYEVVD) has biased composition (basic and acidic residues). The disordered stretch occupies residues 1-77 (MSKDEIKDKK…VASVSTSSTV (77 aa)). The stretch at 19–58 (VDKKKHKKDKKDKKEKKDKKEKKLKKDKKDKKDKKETKSE) forms a coiled coil. The segment covering 21–50 (KKKHKKDKKDKKEKKDKKEKKLKKDKKDKK) has biased composition (basic residues). Over residues 67 to 77 (SVASVSTSSTV) the composition is skewed to low complexity. The Q motif signature appears at 117–143 (LSFSHISLDSRIQAEISKFPKPTPIQA). Residues 146–322 (WPYLLAGKDV…STFMNSPIKV (177 aa)) enclose the Helicase ATP-binding domain. ATP is bound at residue 159–166 (AETGSGKT). A DEAD box motif is present at residues 269 to 272 (DEAD). A Helicase C-terminal domain is found at 351-500 (KLLELLKKYQ…PVPEELKKFG (150 aa)).

It belongs to the DEAD box helicase family. DDX5/DBP2 subfamily.

It localises to the nucleus. It is found in the nucleolus. It catalyses the reaction ATP + H2O = ADP + phosphate + H(+). Functionally, ATP-dependent RNA helicase required for 60S ribosomal subunit synthesis. Involved in efficient pre-rRNA processing, predominantly at site A3, which is necessary for the normal formation of 25S and 5.8S rRNAs. This is ATP-dependent RNA helicase DBP3 (DBP3) from Vanderwaltozyma polyspora (strain ATCC 22028 / DSM 70294 / BCRC 21397 / CBS 2163 / NBRC 10782 / NRRL Y-8283 / UCD 57-17) (Kluyveromyces polysporus).